Consider the following 276-residue polypeptide: NH(3)-dependent NAD(+) synthetase (276 aa).

Residue 43-50 (GISGGVDS) participates in ATP binding. Position 49 (aspartate 49) interacts with Mg(2+). Arginine 146 serves as a coordination point for deamido-NAD(+). Position 166 (threonine 166) interacts with ATP. Residue glutamate 171 participates in Mg(2+) binding. Deamido-NAD(+) is bound by residues lysine 179 and aspartate 186. Residues lysine 195 and threonine 217 each coordinate ATP. 266-267 (HK) provides a ligand contact to deamido-NAD(+).

The protein belongs to the NAD synthetase family. In terms of assembly, homodimer.

The enzyme catalyses deamido-NAD(+) + NH4(+) + ATP = AMP + diphosphate + NAD(+) + H(+). Its pathway is cofactor biosynthesis; NAD(+) biosynthesis; NAD(+) from deamido-NAD(+) (ammonia route): step 1/1. Functionally, catalyzes the ATP-dependent amidation of deamido-NAD to form NAD. Uses ammonia as a nitrogen source. This is NH(3)-dependent NAD(+) synthetase from Aliivibrio fischeri (strain MJ11) (Vibrio fischeri).